Consider the following 506-residue polypeptide: ATP synthase subunit alpha (506 aa).

171–178 (GDRQTGKT) is a binding site for ATP.

This sequence belongs to the ATPase alpha/beta chains family. As to quaternary structure, F-type ATPases have 2 components, CF(1) - the catalytic core - and CF(0) - the membrane proton channel. CF(1) has five subunits: alpha(3), beta(3), gamma(1), delta(1), epsilon(1). CF(0) has four main subunits: a(1), b(1), b'(1) and c(9-12).

It is found in the cellular thylakoid membrane. It carries out the reaction ATP + H2O + 4 H(+)(in) = ADP + phosphate + 5 H(+)(out). Produces ATP from ADP in the presence of a proton gradient across the membrane. The alpha chain is a regulatory subunit. This chain is ATP synthase subunit alpha, found in Trichormus variabilis (strain ATCC 29413 / PCC 7937) (Anabaena variabilis).